We begin with the raw amino-acid sequence, 131 residues long: EG45-like domain containing protein (131 aa).

The signal sequence occupies residues 1–24 (MGVGTKVLVITTMAICLISSAAYA). The region spanning 27-131 (GTATFYTPPY…GKIKIEFNQA (105 aa)) is the Expansin-like EG45; incomplete domain. A disulfide bond links Cys73 and Cys85.

As to expression, expressed in the outer layer of xylem and the vascular cambial zone of roots, in shoot cambium, but not in leaves.

It localises to the secreted. Functionally, might have a systemic role in water and solute homeostasis. Has no expansin-like activity. This Citrus jambhiri (Rough lemon) protein is EG45-like domain containing protein (CjBAp12).